Reading from the N-terminus, the 1024-residue chain is Beta-galactosidase (1024 aa).

Substrate-binding residues include Asn103 and Asp202. Asp202 contacts Na(+). Mg(2+)-binding residues include Glu417, His419, and Glu462. Substrate-binding positions include Glu462 and 538–541; that span reads EYAH. Glu462 (proton donor) is an active-site residue. Catalysis depends on Glu538, which acts as the Nucleophile. Asn598 lines the Mg(2+) pocket. Positions 602 and 605 each coordinate Na(+). Substrate contacts are provided by Asn605 and Trp1000.

It belongs to the glycosyl hydrolase 2 family. Homotetramer. It depends on Mg(2+) as a cofactor. Requires Mn(2+) as cofactor. The cofactor is Na(+).

It catalyses the reaction Hydrolysis of terminal non-reducing beta-D-galactose residues in beta-D-galactosides.. Inhibited by phenylethyl thio-beta-D-galactoside (PETG), isopropyl thio-beta-D-galactoside (IPTG), L-ribose, D-galactonolactone, lactose and 2-amino-D-galactose. The polypeptide is Beta-galactosidase (lacZ) (Escherichia coli (strain K12)).